The following is a 437-amino-acid chain: GTPase Era, mitochondrial (437 aa).

The transit peptide at 1–20 directs the protein to the mitochondrion; the sequence is MAAPRRYCAGLVRALLGARQ. One can recognise an Era-type G domain in the interval 112–330; the sequence is RVLRVVLLGA…QYLLTQAQPG (219 aa). Residues 120–127 are G1; sequence GAPNAGKS. Residue 120–127 participates in GTP binding; sequence GAPNAGKS. A G2 region spans residues 146 to 150; it reads HTTRC. A G3 region spans residues 167–170; that stretch reads DTPG. GTP is bound at residue 167–171; that stretch reads DTPGI. S173 carries the post-translational modification Phosphoserine. 236–239 is a GTP binding site; it reads NKVD. The tract at residues 236-239 is G4; sequence NKVD. The interval 270–292 is disordered; sequence LRSRSSTHCPGPETEGPNAHSVR. The segment at 308–310 is G5; the sequence is LSA. Positions 360-437 constitute a KH type-2 domain; the sequence is LPEEVPYGVQ…LIRLSVKLLK (78 aa).

Belongs to the TRAFAC class TrmE-Era-EngA-EngB-Septin-like GTPase superfamily. Era GTPase family.

It localises to the mitochondrion matrix. The protein localises to the mitochondrion inner membrane. Its function is as follows. Probable GTPase that plays a role in the mitochondrial ribosomal small subunit assembly. Specifically binds the 12S mitochondrial rRNA (12S mt-rRNA) to a 33 nucleotide section delineating the 3' terminal stem-loop region. May act as a chaperone that protects the 12S mt-rRNA on the 28S mitoribosomal subunit during ribosomal small subunit assembly. The polypeptide is GTPase Era, mitochondrial (Eral1) (Mus musculus (Mouse)).